The sequence spans 349 residues: GTPase Obg (349 aa).

The 159-residue stretch at 1 to 159 (MKFLDEAKVY…RWIWLRLKLI (159 aa)) folds into the Obg domain. The 168-residue stretch at 160 to 327 (ADAGLVGLPN…ALRALVAVIG (168 aa)) folds into the OBG-type G domain. GTP is bound by residues 166–173 (GLPNAGKS), 191–195 (FTTLH), 212–215 (DIPG), 279–282 (NKID), and 308–310 (SGV). Mg(2+)-binding residues include serine 173 and threonine 193.

This sequence belongs to the TRAFAC class OBG-HflX-like GTPase superfamily. OBG GTPase family. In terms of assembly, monomer. Mg(2+) serves as cofactor.

The protein resides in the cytoplasm. Its function is as follows. An essential GTPase which binds GTP, GDP and possibly (p)ppGpp with moderate affinity, with high nucleotide exchange rates and a fairly low GTP hydrolysis rate. Plays a role in control of the cell cycle, stress response, ribosome biogenesis and in those bacteria that undergo differentiation, in morphogenesis control. The sequence is that of GTPase Obg from Rhodopseudomonas palustris (strain BisA53).